Consider the following 227-residue polypeptide: MKFAVIQFPGSNCDLDMLHAIRDSLGEEAEYIWHAETSLAGFDAVLLPGGFSYGDYLRTGAIAKFSSIMPEVLRFAEMGKPVLGVCNGFQILTEIGLLPGALIRNNNLHFICKTVPLRVANASTMFTELYEEGEIIQVPVAHGEGNYYCDDETLLKLKENNQIVFTYDSVNPNGSRADIAGIVNERGNVLGMMPHPERAVEEIIGGTDGLRLFESVVKAWKEEQVNA.

The Glutamine amidotransferase type-1 domain occupies 2–226; the sequence is KFAVIQFPGS…VKAWKEEQVN (225 aa). Cysteine 86 (nucleophile) is an active-site residue. Active-site residues include histidine 195 and glutamate 197.

As to quaternary structure, part of the FGAM synthase complex composed of 1 PurL, 1 PurQ and 2 PurS subunits.

The protein localises to the cytoplasm. The catalysed reaction is N(2)-formyl-N(1)-(5-phospho-beta-D-ribosyl)glycinamide + L-glutamine + ATP + H2O = 2-formamido-N(1)-(5-O-phospho-beta-D-ribosyl)acetamidine + L-glutamate + ADP + phosphate + H(+). It catalyses the reaction L-glutamine + H2O = L-glutamate + NH4(+). It participates in purine metabolism; IMP biosynthesis via de novo pathway; 5-amino-1-(5-phospho-D-ribosyl)imidazole from N(2)-formyl-N(1)-(5-phospho-D-ribosyl)glycinamide: step 1/2. In terms of biological role, part of the phosphoribosylformylglycinamidine synthase complex involved in the purines biosynthetic pathway. Catalyzes the ATP-dependent conversion of formylglycinamide ribonucleotide (FGAR) and glutamine to yield formylglycinamidine ribonucleotide (FGAM) and glutamate. The FGAM synthase complex is composed of three subunits. PurQ produces an ammonia molecule by converting glutamine to glutamate. PurL transfers the ammonia molecule to FGAR to form FGAM in an ATP-dependent manner. PurS interacts with PurQ and PurL and is thought to assist in the transfer of the ammonia molecule from PurQ to PurL. In Listeria monocytogenes serovar 1/2a (strain ATCC BAA-679 / EGD-e), this protein is Phosphoribosylformylglycinamidine synthase subunit PurQ.